Reading from the N-terminus, the 396-residue chain is Gap junction gamma-1 protein (396 aa).

Over 1-22 (MSWSFLTRLLEEIHNHSTFVGK) the chain is Cytoplasmic. A helical transmembrane segment spans residues 23-45 (IWLTVLIVFRIVLTAVGGESIYY). Over 46–75 (DEQSKFVCNTEQPGCENVCYDAFAPLSHVR) the chain is Extracellular. A helical transmembrane segment spans residues 76 to 95 (FWVFQIILVATPSVMYLGYA). Residues 96 to 175 (IHKIAKMEHG…RRIREDGLMK (80 aa)) are Cytoplasmic-facing. The tract at residues 145 to 165 (ELESEKENKEQNQSKPKHDGR) is disordered. Residues 147–156 (ESEKENKEQN) show a composition bias toward basic and acidic residues. The helical transmembrane segment at 176–198 (IYVLQLLARTMFEVGFLIGQYFL) threads the bilayer. At 199–228 (YGFQVHPFYVCSRVPCPHKIDCFISRPTEK) the chain is on the extracellular side. Residues 229 to 248 (TIFLLIMYGVTGLCLLLNIW) form a helical membrane-spanning segment. Residues 249–396 (EMLHLGFGTI…SGDGKTSVWI (148 aa)) are Cytoplasmic-facing. Residues 357–396 (NHQNNPHGPREKKAKVGSKAGSNKSSASSKSGDGKTSVWI) form a disordered region. The span at 373–396 (GSKAGSNKSSASSKSGDGKTSVWI) shows a compositional bias: low complexity.

Belongs to the connexin family. Gamma-type subfamily. As to quaternary structure, a connexon is composed of a hexamer of connexins. Interacts with CNST.

It localises to the cell membrane. Its subcellular location is the cell junction. It is found in the gap junction. Functionally, one gap junction consists of a cluster of closely packed pairs of transmembrane channels, the connexons, through which materials of low MW diffuse from one cell to a neighboring cell. This chain is Gap junction gamma-1 protein (GJC1), found in Sus scrofa (Pig).